The primary structure comprises 890 residues: MTDVTIKTLAAERQTSVERLVQQFADAGIRKSADDSVSAQEKQTLIDHLNQKNSGPDKLTLQRKTRSTLNIPGTGGKSKSVQIEVRKKRTFVKRDPQEAERLAAEEQAQREAEEQARREAEESAKREAQQKAEREAAEQAKREAAEQAKREAAEKDKVSNQQDDMTKNAQAEKARREQEAAELKRKAEEEARRKLEEEARRVAEEARRMAEENKWIDNAEPTEDSSDYHVTTSQHARQAEDESDREVEGGRGRGRNAKAARPKKGNKHAESKADREEARAAVRGGKGGKRKGSSLQQGFQKPAQAVNRDVVIGETITVGELANKMAVKGSQVIKAMMKLGAMATINQVIDQETAQLVAEEMGHKVILRRENELEEAVMSDRDTGAAAEPRAPVVTIMGHVDHGKTSLLDYIRSTKVASGEAGGITQHIGAYHVETENGMITFLDTPGHAAFTSMRARGAQATDIVVLVVAADDGVMPQTIEAIQHAKAAGVPVVVAVNKIDKPEADPDRVKNELSQYGILPEEWGGESQFVHVSAKAGTGIDELLDAILLQAEVLELKAVRKGMASGAVIESFLDKGRGPVATVLVREGTLHKGDIVLCGFEYGRVRAMRNELGQEVLEAGPSIPVEILGLSGVPAAGDEVTVVRDEKKAREVALYRQGKFREVKLARQQKSKLENMFANMTEGEVHEVNIVLKADVQGSVEAISDSLLKLSTDEVKVKIIGSGVGGITETDATLAAASNAILVGFNVRADASARKVIEAESLDLRYYSVIYNLIDEVKAAMSGMLSPELKQQIIGLAEVRDVFKSPKFGAIAGCMVTEGVVKRHNPIRVLRDNVVIYEGELESLRRFKDDVNEVRNGMECGIGVKNYNDVRTGDVIEVFEIIEIQRTIA.

Residues 45 to 304 form a disordered region; sequence LIDHLNQKNS…LQQGFQKPAQ (260 aa). The span at 67-81 shows a compositional bias: polar residues; it reads STLNIPGTGGKSKSV. A compositionally biased stretch (basic and acidic residues) spans 92–217; the sequence is VKRDPQEAER…RMAEENKWID (126 aa). Over residues 252-266 the composition is skewed to basic residues; it reads GRGRNAKAARPKKGN. Over residues 267-280 the composition is skewed to basic and acidic residues; sequence KHAESKADREEARA. One can recognise a tr-type G domain in the interval 389–558; that stretch reads PRAPVVTIMG…LLQAEVLELK (170 aa). Residues 398 to 405 are G1; sequence GHVDHGKT. Position 398–405 (398–405) interacts with GTP; the sequence is GHVDHGKT. The segment at 423–427 is G2; that stretch reads GITQH. Residues 444-447 are G3; that stretch reads DTPG. Residues 444–448 and 498–501 each bind GTP; these read DTPGH and NKID. The tract at residues 498–501 is G4; it reads NKID. Positions 534-536 are G5; the sequence is SAK. K808 carries the N6-acetyllysine modification.

This sequence belongs to the TRAFAC class translation factor GTPase superfamily. Classic translation factor GTPase family. IF-2 subfamily.

The protein resides in the cytoplasm. Its function is as follows. One of the essential components for the initiation of protein synthesis. Protects formylmethionyl-tRNA from spontaneous hydrolysis and promotes its binding to the 30S ribosomal subunits. Also involved in the hydrolysis of GTP during the formation of the 70S ribosomal complex. The sequence is that of Translation initiation factor IF-2 from Escherichia coli O81 (strain ED1a).